The chain runs to 240 residues: 2,3,4,5-tetrahydropyridine-2,6-dicarboxylate N-acetyltransferase (240 aa).

Belongs to the transferase hexapeptide repeat family. DapH subfamily.

The catalysed reaction is (S)-2,3,4,5-tetrahydrodipicolinate + acetyl-CoA + H2O = L-2-acetamido-6-oxoheptanedioate + CoA. It participates in amino-acid biosynthesis; L-lysine biosynthesis via DAP pathway; LL-2,6-diaminopimelate from (S)-tetrahydrodipicolinate (acetylase route): step 1/3. In terms of biological role, catalyzes the transfer of an acetyl group from acetyl-CoA to tetrahydrodipicolinate. The chain is 2,3,4,5-tetrahydropyridine-2,6-dicarboxylate N-acetyltransferase from Staphylococcus epidermidis (strain ATCC 12228 / FDA PCI 1200).